A 2590-amino-acid polypeptide reads, in one-letter code: MNLLRRSGKRRRSESGSDSFSGSGGDSSASPQFLSGSVLSPPPGLGRCLKAAAAGECKPTVPDYERDKLLLANWGLPKAVLEKYHSFGVKKMFEWQAECLLLGQVLEGKNLVYSAPTSAGKTLVAELLILKRVLEMRKKALFILPFVSVAKEKKYYLQSLFQEVGIKVDGYMGSTSPSRHFSSLDIAVCTIERANGLINRLIEENKMDLLGMVVVDELHMLGDSHRGYLLELLLTKICYITRKSASCQADLASSLSNAVQIVGMSATLPNLELVASWLNAELYHTDFRPVPLLESVKVGNSIYDSSMKLVREFEPMLQVKGDEDHVVSLCYETICDNHSVLLFCPSKKWCEKLADIIAREFYNLHHQAEGLVKPSECPPVILEQKELLEVMDQLRRLPSGLDSVLQKTVPWGVAFHHAGLTFEERDIIEGAFRQGLIRVLAATSTLSSGVNLPARRVIIRTPIFGGRPLDILTYKQMVGRAGRKGVDTVGESILICKNSEKSKGIALLQGSLKPVRSCLQRREGEEVTGSMIRAILEIIVGGVASTSQDMHTYAACTFLAASMKEGKQGIQRNQESVQLGAIEACVMWLLENEFIQSTEASDGTEGKVYHPTHLGSATLSSSLSPADTLDIFADLQRAMKGFVLENDLHILYLVTPMFEDWTTIDWYRFFCLWEKLPTSMKRVAELVGVEEGFLARCVKGKVVARTERQHRQMAIHKRFFTSLVLLDLISEVPLREINQKYGCNRGQIQSLQQSAAVYAGMITVFSNRLGWHNMELLLSQFQKRLTFGIQRELCDLVRVSLLNAQRARVLYASGFHTVADLARANIVEVEVILKNAVPFKSARKAVDEEEEAVEERRNMRTIWVTGRKGLTEREAAALIVEEARMILQQDLVEMGVQWNPCALLHSSTCSLTHSESEVKEHTFISQTKSSYKKLTSKNKSNTIFSDSYIKHSPNIVQDLNKSREHTSSFNCNFQNGNQEHQTCSIFRARKRASLDINKEKPGASQNEGKTSDKKVVQTFSQKTKKAPLNFNSEKMSRSFRSWKRRKHLKRSRDSSPLKDSGACRIHLQGQTLSNPSLCEDPFTLDEKKTEFRNSGPFAKNVSLSGKEKDNKTSFPLQIKQNCSWNITLTNDNFVEHIVTGSQSKNVTCQATSVVSEKGRGVAVEAEKINEVLIQNGSKNQNVYMKHHDIHPINQYLRKQSHEQTSTITKQKNIIERQMPCEAVSSYINRDSNVTINCERIKLNTEENKPSHFQALGDDISRTVIPSEVLPSAGAFSKSEGQHENFLNISRLQEKTGTYTTNKTKNNHVSDLGLVLCDFEDSFYLDTQSEKIIQQMATENAKLGAKDTNLAAGIMQKSLVQQNSMNSFQKECHIPFPAEQHPLGATKIDHLDLKTVGTMKQSSDSHGVDILTPESPIFHSPILLEENGLFLKKNEVSVTDSQLNSFLQGYQTQETVKPVILLIPQKRTPTGVEGECLPVPETSLNMSDSLLFDSFSDDYLVKEQLPDMQMKEPLPSEVTSNHFSDSLCLQEDLIKKSNVNENQDTHQQLTCSNDESIIFSEMDSVQMVEALDNVDIFPVQEKNHTVVSPRALELSDPVLDEHHQGDQDGGDQDERAEKSKLTGTRQNHSFIWSGASFDLSPGLQRILDKVSSPLENEKLKSMTINFSSLNRKNTELNEEQEVISNLETKQVQGISFSSNNEVKSKIEMLENNANHDETSSLLPRKESNIVDDNGLIPPTPIPTSASKLTFPGILETPVNPWKTNNVLQPGESYLFGSPSDIKNHDLSPGSRNGFKDNSPISDTSFSLQLSQDGLQLTPASSSSESLSIIDVASDQNLFQTFIKEWRCKKRFSISLACEKIRSLTSSKTATIGSRFKQASSPQEIPIRDDGFPIKGCDDTLVVGLAVCWGGRDAYYFSLQKEQKHSEISASLVPPSLDPSLTLKDRMWYLQSCLRKESDKECSVVIYDFIQSYKILLLSCGISLEQSYEDPKVACWLLDPDSQEPTLHSIVTSFLPHELPLLEGMETSQGIQSLGLNAGSEHSGRYRASVESILIFNSMNQLNSLLQKENLQDVFRKVEMPSQYCLALLELNGIGFSTAECESQKHIMQAKLDAIETQAYQLAGHSFSFTSSDDIAEVLFLELKLPPNREMKNQGSKKTLGSTRRGIDNGRKLRLGRQFSTSKDVLNKLKALHPLPGLILEWRRITNAITKVVFPLQREKCLNPFLGMERIYPVSQSHTATGRITFTEPNIQNVPRDFEIKMPTLVGESPPSQAVGKGLLPMGRGKYKKGFSVNPRCQAQMEERAADRGMPFSISMRHAFVPFPGGSILAADYSQLELRILAHLSHDRRLIQVLNTGADVFRSIAAEWKMIEPESVGDDLRQQAKQICYGIIYGMGAKSLGEQMGIKENDAACYIDSFKSRYTGINQFMTETVKNCKRDGFVQTILGRRRYLPGIKDNNPYRKAHAERQAINTIVQGSAADIVKIATVNIQKQLETFHSTFKSHGHREGMLQSDQTGLSRKRKLQGMFCPIRGGFFILQLHDELLYEVAEEDVVQVAQIVKNEMESAVKLSVKLKVKVKIGASWGELKDFDV.

Over residues Met1–Arg12 the composition is skewed to basic residues. Residues Met1–Phe33 are disordered. The segment covering Gly16–Ser30 has biased composition (low complexity). ATP-binding positions include Gln96 and Ala115–Thr122. In terms of domain architecture, Helicase ATP-binding spans Leu102–Asp286. The interval Leu102–Ala554 is helicase activity. The DEAH box motif lies at Asp216–His219. Residues Gly321–Ala554 enclose the Helicase C-terminal domain. The segment at Asp847–Met894 is interaction with RAD51. N6-acetyllysine is present on Lys990. Residues Lys1034–Ser1060 are disordered. A compositionally biased stretch (basic residues) spans Arg1040–Arg1050. 7 positions are modified to phosphoserine; by PLK1: Ser1289, Ser1482, Ser1486, Ser1488, Ser1493, Ser1555, and Ser1563. Residues Ser1594–Gly1622 form a disordered region. The span at Leu1598–Lys1619 shows a compositional bias: basic and acidic residues. A phosphoserine; by PLK1 mark is found at Ser1628 and Ser1635. Position 1755 is a phosphothreonine; by PLK1 (Thr1755). The disordered stretch occupies residues Pro1777 to Ser1797. Positions Ala2097–Glu2584 are DNA polymerase activity. Loop regions lie at residues Lys2142 to Phe2177 and Glu2257 to Pro2322. Positions 2330 and 2331 each coordinate Mg(2+). The segment at Gln2491–Ile2535 is loop 3. Mg(2+) is bound at residue Asp2540.

Belongs to the DNA polymerase type-A family. In terms of assembly, homomultimer; forms homodimers and homotetramers. Interacts with RAD51. Interacts with ORC2 and ORC4. Interacts with RHNO1; interaction takes place during mitosis and promotes POLQ recruitment to DNA damage sites. Interacts (when phosphorylated) with TOPBP1 (via BRCT domains 7 and 8); promoting POLQ recruitment to DNA damage sites. Requires Mg(2+) as cofactor. In terms of processing, phosphorylated by PLK1; promoting interaction with TOPBP1 and recruitment to DNA damage sites. Highly expressed in testis.

The protein resides in the nucleus. It is found in the chromosome. It carries out the reaction DNA(n) + a 2'-deoxyribonucleoside 5'-triphosphate = DNA(n+1) + diphosphate. The enzyme catalyses ATP + H2O = ADP + phosphate + H(+). Specifically inhibited by the antibiotic novobiocin. The polymerase activity is specifically inhibited by the small molecule ART558. Novobiocin and ART558 confer specific killing of BRCA1/2-deficient cells and synergize with the poly [ADP-ribose] polymerase (PARP) inhibitor olaparib. Low-fidelity DNA polymerase with a helicase activity that promotes microhomology-mediated end-joining (MMEJ), an alternative non-homologous end-joining (NHEJ) machinery required to repair double-strand breaks in DNA during mitosis. MMEJ is an error-prone repair pathway that produces deletions of sequences from the strand being repaired and promotes genomic rearrangements, such as telomere fusions, some of them leading to cellular transformation. MMEJ is required during mitosis to repair persistent double-strand breaks that originate in S-phase. Although error-prone, MMEJ protects against chromosomal instability and tumorigenesis. The polymerase acts by binding directly the 2 ends of resected double-strand breaks, allowing microhomologous sequences in the overhangs to form base pairs. It then extends each strand from the base-paired region using the opposing overhang as a template. Requires partially resected DNA containing 2 to 6 base pairs of microhomology to perform MMEJ. The polymerase lacks proofreading activity and is highly promiscuous: unlike most polymerases, promotes extension of ssDNA and partial ssDNA (pssDNA) substrates. When the ends of a break do not contain terminal microhomology must identify embedded complementary sequences through a scanning step. Also acts as a DNA helicase, promoting dissociation of the replication protein A complex (RPA/RP-A), composed of RPA1, RPA2 and RPA3, from resected double-strand breaks to allow their annealing and subsequent joining by MMEJ. Removal of RPA/RP-A complex proteins prevents RAD51 accumulation at resected ends, thereby inhibiting homology-recombination repair (HR) pathway. Also shows RNA-directed DNA polymerase activity to mediate DNA repair in vitro; however this activity needs additional evidence in vivo. May also have lyase activity. Involved in somatic hypermutation of immunoglobulin genes, a process that requires the activity of DNA polymerases to ultimately introduce mutations at both A/T and C/G base pairs. POLQ-mediated end joining activity is involved in random integration of exogenous DNA hampers. In Homo sapiens (Human), this protein is DNA polymerase theta.